A 237-amino-acid chain; its full sequence is Flagellar brake protein YcgR (237 aa).

One can recognise a PilZ domain in the interval 108-225 (QRRRQFRVTT…MERKIQSAVF (118 aa)).

This sequence belongs to the YcgR family. In terms of assembly, monomer. Interacts with the flagellar basal bodies.

The protein localises to the bacterial flagellum basal body. Functionally, acts as a flagellar brake, regulating swimming and swarming in a bis-(3'-5') cyclic diguanylic acid (c-di-GMP)-dependent manner. Binds 1 c-di-GMP dimer per subunit. Increasing levels of c-di-GMP lead to decreased motility. The protein is Flagellar brake protein YcgR of Serratia proteamaculans (strain 568).